A 38-amino-acid chain; its full sequence is Photosystem II reaction center protein L (38 aa).

A helical transmembrane segment spans residues 17–37; that stretch reads SLYWGLLLIFVLAVSFSNYFF.

Belongs to the PsbL family. PSII is composed of 1 copy each of membrane proteins PsbA, PsbB, PsbC, PsbD, PsbE, PsbF, PsbH, PsbI, PsbJ, PsbK, PsbL, PsbM, PsbT, PsbX, PsbY, PsbZ, Psb30/Ycf12, at least 3 peripheral proteins of the oxygen-evolving complex and a large number of cofactors. It forms dimeric complexes.

The protein localises to the plastid. Its subcellular location is the chloroplast thylakoid membrane. One of the components of the core complex of photosystem II (PSII). PSII is a light-driven water:plastoquinone oxidoreductase that uses light energy to abstract electrons from H(2)O, generating O(2) and a proton gradient subsequently used for ATP formation. It consists of a core antenna complex that captures photons, and an electron transfer chain that converts photonic excitation into a charge separation. This subunit is found at the monomer-monomer interface and is required for correct PSII assembly and/or dimerization. The protein is Photosystem II reaction center protein L of Amborella trichopoda.